The primary structure comprises 234 residues: Purine nucleoside phosphorylase DeoD-type (234 aa).

An a purine D-ribonucleoside-binding site is contributed by His4. Residues Gly20, Arg24, Arg43, and 87–90 (RIGS) contribute to the phosphate site. A purine D-ribonucleoside contacts are provided by residues Glu162, 179-181 (EME), and 203-204 (SD). Asp204 acts as the Proton donor in catalysis.

This sequence belongs to the PNP/UDP phosphorylase family. In terms of assembly, homohexamer; trimer of homodimers.

It carries out the reaction a purine D-ribonucleoside + phosphate = a purine nucleobase + alpha-D-ribose 1-phosphate. It catalyses the reaction a purine 2'-deoxy-D-ribonucleoside + phosphate = a purine nucleobase + 2-deoxy-alpha-D-ribose 1-phosphate. Its function is as follows. Catalyzes the reversible phosphorolytic breakdown of the N-glycosidic bond in the beta-(deoxy)ribonucleoside molecules, with the formation of the corresponding free purine bases and pentose-1-phosphate. This is Purine nucleoside phosphorylase DeoD-type from Roseobacter denitrificans (strain ATCC 33942 / OCh 114) (Erythrobacter sp. (strain OCh 114)).